Here is a 236-residue protein sequence, read N- to C-terminus: Small ribosomal subunit protein uS2c (236 aa).

This sequence belongs to the universal ribosomal protein uS2 family.

Its subcellular location is the plastid. The protein localises to the chloroplast. The protein is Small ribosomal subunit protein uS2c (rps2) of Phaseolus vulgaris (Kidney bean).